Consider the following 181-residue polypeptide: ATP synthase subunit delta (181 aa).

Belongs to the ATPase delta chain family. As to quaternary structure, F-type ATPases have 2 components, F(1) - the catalytic core - and F(0) - the membrane proton channel. F(1) has five subunits: alpha(3), beta(3), gamma(1), delta(1), epsilon(1). F(0) has three main subunits: a(1), b(2) and c(10-14). The alpha and beta chains form an alternating ring which encloses part of the gamma chain. F(1) is attached to F(0) by a central stalk formed by the gamma and epsilon chains, while a peripheral stalk is formed by the delta and b chains.

Its subcellular location is the cell inner membrane. Its function is as follows. F(1)F(0) ATP synthase produces ATP from ADP in the presence of a proton or sodium gradient. F-type ATPases consist of two structural domains, F(1) containing the extramembraneous catalytic core and F(0) containing the membrane proton channel, linked together by a central stalk and a peripheral stalk. During catalysis, ATP synthesis in the catalytic domain of F(1) is coupled via a rotary mechanism of the central stalk subunits to proton translocation. In terms of biological role, this protein is part of the stalk that links CF(0) to CF(1). It either transmits conformational changes from CF(0) to CF(1) or is implicated in proton conduction. This chain is ATP synthase subunit delta, found in Syntrophus aciditrophicus (strain SB).